Here is a 547-residue protein sequence, read N- to C-terminus: Chaperonin GroEL (547 aa).

Residues 30-33 (TLGP), Lys-51, 87-91 (DGTTT), Gly-415, and Asp-496 contribute to the ATP site. The segment at 527–547 (ENTPDMPAMPPGGMGGMGGMY) is disordered. The span at 538–547 (GGMGGMGGMY) shows a compositional bias: gly residues.

It belongs to the chaperonin (HSP60) family. Forms a cylinder of 14 subunits composed of two heptameric rings stacked back-to-back. Interacts with the co-chaperonin GroES.

The protein resides in the cytoplasm. It catalyses the reaction ATP + H2O + a folded polypeptide = ADP + phosphate + an unfolded polypeptide.. Together with its co-chaperonin GroES, plays an essential role in assisting protein folding. The GroEL-GroES system forms a nano-cage that allows encapsulation of the non-native substrate proteins and provides a physical environment optimized to promote and accelerate protein folding. The sequence is that of Chaperonin GroEL from Chlorobium phaeovibrioides (strain DSM 265 / 1930) (Prosthecochloris vibrioformis (strain DSM 265)).